We begin with the raw amino-acid sequence, 512 residues long: Cytochrome P450 84A4 (512 aa).

A helical transmembrane segment spans residues 7–24 (LIVLVPLLLFLFPHLLLR). A heme-binding site is contributed by Cys-447.

Belongs to the cytochrome P450 family. Heme is required as a cofactor. As to expression, expressed in seedlings, roots, stems and inflorescence nodes. Low or no expression in leaves, flowers, seeds and lignifying tissue.

The protein localises to the membrane. Cytochrome P450 involved in the production of catechol-substituted substrates needed for the arabidopyrones biosynthesis. Converts p-coumaraldehyde into caffealdehyde. This is Cytochrome P450 84A4 (CYP84A4) from Arabidopsis thaliana (Mouse-ear cress).